A 203-amino-acid polypeptide reads, in one-letter code: Meiotically up-regulated protein PB17E12.09 (203 aa).

The stretch at 92-177 forms a coiled coil; that stretch reads CNRKIEGYIK…KEMQLYMTKI (86 aa).

The protein resides in the cytoplasm. Its function is as follows. Has a role in meiosis and sporulation. This is Meiotically up-regulated protein PB17E12.09 from Schizosaccharomyces pombe (strain 972 / ATCC 24843) (Fission yeast).